The sequence spans 260 residues: Diphthine synthase (260 aa).

S-adenosyl-L-methionine-binding positions include L9, D85, I88, 113-114, L168, A208, and H233; that span reads TA.

Belongs to the diphthine synthase family. Homodimer.

It carries out the reaction 2-[(3S)-amino-3-carboxypropyl]-L-histidyl-[translation elongation factor 2] + 3 S-adenosyl-L-methionine = diphthine-[translation elongation factor 2] + 3 S-adenosyl-L-homocysteine + 3 H(+). Its pathway is protein modification; peptidyl-diphthamide biosynthesis. In terms of biological role, S-adenosyl-L-methionine-dependent methyltransferase that catalyzes the trimethylation of the amino group of the modified target histidine residue in translation elongation factor 2 (EF-2), to form an intermediate called diphthine. The three successive methylation reactions represent the second step of diphthamide biosynthesis. The chain is Diphthine synthase from Halobacterium salinarum (strain ATCC 29341 / DSM 671 / R1).